We begin with the raw amino-acid sequence, 204 residues long: VEL1-related protein AC977.05c (204 aa).

The signal sequence occupies residues 1–17 (MIFKNLISLFFIGLATA).

Belongs to the VEL1 family.

It localises to the cytoplasm. Its subcellular location is the cytosol. The protein is VEL1-related protein AC977.05c of Schizosaccharomyces pombe (strain 972 / ATCC 24843) (Fission yeast).